The sequence spans 874 residues: Valine--tRNA ligase (874 aa).

A compositionally biased stretch (polar residues) spans 1-10 (MTENSQQQPP). The interval 1 to 23 (MTENSQQQPPASEPELPTQYAPA) is disordered. Residues 57-67 (PNVTGSLHLGH) carry the 'HIGH' region motif. The short motif at 531–535 (KMSKS) is the 'KMSKS' region element. Lys534 serves as a coordination point for ATP. Positions 806-871 (IDIVAERKRL…ARIQAQLDRM (66 aa)) form a coiled coil.

The protein belongs to the class-I aminoacyl-tRNA synthetase family. ValS type 1 subfamily. As to quaternary structure, monomer.

It is found in the cytoplasm. The enzyme catalyses tRNA(Val) + L-valine + ATP = L-valyl-tRNA(Val) + AMP + diphosphate. Functionally, catalyzes the attachment of valine to tRNA(Val). As ValRS can inadvertently accommodate and process structurally similar amino acids such as threonine, to avoid such errors, it has a 'posttransfer' editing activity that hydrolyzes mischarged Thr-tRNA(Val) in a tRNA-dependent manner. The protein is Valine--tRNA ligase of Streptomyces avermitilis (strain ATCC 31267 / DSM 46492 / JCM 5070 / NBRC 14893 / NCIMB 12804 / NRRL 8165 / MA-4680).